A 141-amino-acid chain; its full sequence is MAIERTLSIIKPDAVAKNVIGQIYARFEAAGLKIAAARMAHLSRQEAEQFYAVHKERPFFKDLVDFMISGPVMIQVLEGENAILKNRELMGATDPKKAAPGTIRADFADSIDANAVHGSDAAETAQVEVSFFFPGLNIYAR.

6 residues coordinate ATP: Lys11, Phe59, Arg87, Thr93, Arg104, and Asn114. The active-site Pros-phosphohistidine intermediate is His117.

The protein belongs to the NDK family. In terms of assembly, homotetramer. The cofactor is Mg(2+).

It localises to the cytoplasm. The catalysed reaction is a 2'-deoxyribonucleoside 5'-diphosphate + ATP = a 2'-deoxyribonucleoside 5'-triphosphate + ADP. The enzyme catalyses a ribonucleoside 5'-diphosphate + ATP = a ribonucleoside 5'-triphosphate + ADP. Functionally, major role in the synthesis of nucleoside triphosphates other than ATP. The ATP gamma phosphate is transferred to the NDP beta phosphate via a ping-pong mechanism, using a phosphorylated active-site intermediate. The protein is Nucleoside diphosphate kinase of Paracidovorax citrulli (strain AAC00-1) (Acidovorax citrulli).